The chain runs to 432 residues: Pachytene checkpoint protein 2 homolog (432 aa).

The residue at position 1 (methionine 1) is an N-acetylmethionine. 179 to 186 (GPPGTGKT) contributes to the ATP binding site.

The protein belongs to the AAA ATPase family. PCH2 subfamily. In terms of assembly, specifically interacts with the ligand binding domain of the thyroid receptor (TR). This interaction does not require the presence of thyroid hormone for its interaction. Interacts with proteasome subunit PSMA8; to participate in meiosis progression during spermatogenesis.

Plays a key role in chromosome recombination and chromosome structure development during meiosis. Required at early steps in meiotic recombination that leads to non-crossovers pathways. Also needed for efficient completion of homologous synapsis by influencing crossover distribution along the chromosomes affecting both crossovers and non-crossovers pathways. Also required for development of higher-order chromosome structures and is needed for synaptonemal-complex formation. In males, required for efficient synapsis of the sex chromosomes and for sex body formation. Promotes early steps of the DNA double-strand breaks (DSBs) repair process upstream of the assembly of RAD51 complexes. Required for depletion of HORMAD1 and HORMAD2 from synapsed chromosomes. The sequence is that of Pachytene checkpoint protein 2 homolog (TRIP13) from Canis lupus familiaris (Dog).